Here is a 365-residue protein sequence, read N- to C-terminus: Phospho-N-acetylmuramoyl-pentapeptide-transferase (365 aa).

The next 10 helical transmembrane spans lie at 19-39, 49-69, 92-112, 116-136, 156-176, 183-203, 215-235, 238-258, 279-299, and 345-365; these read TLLI…SSWA, LLIA…AVVP, AGTP…IAVV, FNPD…IGWV, LFLQ…YGPT, IMQF…FALV, VDGL…LLVA, NPAL…FVHH, LAAV…SGIF, and QIVG…MATA.

The protein belongs to the glycosyltransferase 4 family. MraY subfamily. The cofactor is Mg(2+).

The protein resides in the cell inner membrane. It catalyses the reaction UDP-N-acetyl-alpha-D-muramoyl-L-alanyl-gamma-D-glutamyl-meso-2,6-diaminopimeloyl-D-alanyl-D-alanine + di-trans,octa-cis-undecaprenyl phosphate = di-trans,octa-cis-undecaprenyl diphospho-N-acetyl-alpha-D-muramoyl-L-alanyl-D-glutamyl-meso-2,6-diaminopimeloyl-D-alanyl-D-alanine + UMP. The protein operates within cell wall biogenesis; peptidoglycan biosynthesis. In terms of biological role, catalyzes the initial step of the lipid cycle reactions in the biosynthesis of the cell wall peptidoglycan: transfers peptidoglycan precursor phospho-MurNAc-pentapeptide from UDP-MurNAc-pentapeptide onto the lipid carrier undecaprenyl phosphate, yielding undecaprenyl-pyrophosphoryl-MurNAc-pentapeptide, known as lipid I. The protein is Phospho-N-acetylmuramoyl-pentapeptide-transferase of Synechocystis sp. (strain ATCC 27184 / PCC 6803 / Kazusa).